The sequence spans 396 residues: Putative T-box protein 39 (396 aa).

The segment at residues 11-192 (MAEEDRWKQW…KNSTYGNRLD (182 aa)) is a DNA-binding region (T-box). The tract at residues 185–215 (STYGNRLDGGNKRKNTDSSEERTSKRSKNET) is disordered. The segment covering 193–215 (GGNKRKNTDSSEERTSKRSKNET) has biased composition (basic and acidic residues).

Its subcellular location is the nucleus. The sequence is that of Putative T-box protein 39 (tbx-39) from Caenorhabditis elegans.